A 346-amino-acid polypeptide reads, in one-letter code: Ribosomal RNA small subunit methyltransferase H (346 aa).

S-adenosyl-L-methionine contacts are provided by residues 47–49 (GGY), aspartate 65, phenylalanine 92, aspartate 113, and glutamine 120. Positions 294-346 (AVEPGSDEVAGNPRARSAKLRAAERTDAPAHPDGDLAGLLPADLSQRRGRRRS) are disordered. Basic and acidic residues predominate over residues 314-327 (RAAERTDAPAHPDG). Low complexity predominate over residues 328-337 (DLAGLLPADL).

It belongs to the methyltransferase superfamily. RsmH family.

It is found in the cytoplasm. The enzyme catalyses cytidine(1402) in 16S rRNA + S-adenosyl-L-methionine = N(4)-methylcytidine(1402) in 16S rRNA + S-adenosyl-L-homocysteine + H(+). Its function is as follows. Specifically methylates the N4 position of cytidine in position 1402 (C1402) of 16S rRNA. This Azorhizobium caulinodans (strain ATCC 43989 / DSM 5975 / JCM 20966 / LMG 6465 / NBRC 14845 / NCIMB 13405 / ORS 571) protein is Ribosomal RNA small subunit methyltransferase H.